The sequence spans 285 residues: RNase adapter protein RapZ (285 aa).

8-15 (GRSGSGKS) contacts ATP. 56–59 (DVRN) lines the GTP pocket. The segment at 266 to 285 (RSRGKNVQSRHRTLEKRKPS) is RNA-binding.

This sequence belongs to the RapZ-like family. RapZ subfamily. In terms of assembly, homotrimer.

Functionally, modulates the synthesis of GlmS, by affecting the processing and stability of the regulatory small RNA GlmZ. When glucosamine-6-phosphate (GlcN6P) concentrations are high in the cell, RapZ binds GlmZ and targets it to cleavage by RNase E. Consequently, GlmZ is inactivated and unable to activate GlmS synthesis. Under low GlcN6P concentrations, RapZ is sequestered and inactivated by an other regulatory small RNA, GlmY, preventing GlmZ degradation and leading to synthesis of GlmS. This is RNase adapter protein RapZ from Pectobacterium atrosepticum (strain SCRI 1043 / ATCC BAA-672) (Erwinia carotovora subsp. atroseptica).